The primary structure comprises 245 residues: Ribonuclease 3 (245 aa).

In terms of domain architecture, RNase III spans 19 to 148 (FKVFQEKIGI…FIGALYLDQG (130 aa)). Residue E61 participates in Mg(2+) binding. D65 is an active-site residue. Mg(2+) is bound by residues D134 and E137. E137 is an active-site residue. A DRBM domain is found at 174–243 (DYKSQLQELI…AAEALKKLKE (70 aa)).

It belongs to the ribonuclease III family. In terms of assembly, homodimer. It depends on Mg(2+) as a cofactor.

It is found in the cytoplasm. The catalysed reaction is Endonucleolytic cleavage to 5'-phosphomonoester.. Functionally, digests double-stranded RNA. Involved in the processing of primary rRNA transcript to yield the immediate precursors to the large and small rRNAs (23S and 16S). Processes some mRNAs, and tRNAs when they are encoded in the rRNA operon. Processes pre-crRNA and tracrRNA of type II CRISPR loci if present in the organism. This is Ribonuclease 3 from Bacillus cereus (strain ATCC 14579 / DSM 31 / CCUG 7414 / JCM 2152 / NBRC 15305 / NCIMB 9373 / NCTC 2599 / NRRL B-3711).